We begin with the raw amino-acid sequence, 899 residues long: Probable dipeptidyl-aminopeptidase B (899 aa).

Disordered stretches follow at residues 1–37 (MARK…SDGS) and 51–84 (KITR…TENS). At 1-91 (MARKDKDNGP…ENSKRNRGSR (91 aa)) the chain is on the cytoplasmic side. Positions 22–37 (SSASFSSTDSLSSDGS) are enriched in low complexity. Over residues 61-74 (NPYRDDDVELERGD) the composition is skewed to basic and acidic residues. Residues 92–112 (LIWVVGLLCLGGWILAFVLFW) traverse the membrane as a helical; Signal-anchor for type II membrane protein segment. At 113–899 (GRRNSELSSS…QQGNSVLPVT (787 aa)) the chain is on the vacuolar side. 7 N-linked (GlcNAc...) asparagine glycosylation sites follow: asparagine 149, asparagine 194, asparagine 347, asparagine 409, asparagine 513, asparagine 638, and asparagine 643. Residue serine 752 is the Charge relay system of the active site. Asparagine 811 carries an N-linked (GlcNAc...) asparagine glycan. Active-site charge relay system residues include aspartate 829 and histidine 862.

This sequence belongs to the peptidase S9B family.

The protein localises to the vacuole membrane. The enzyme catalyses Release of an N-terminal dipeptide, Xaa-Yaa-|-Zaa-, from a polypeptide, preferentially when Yaa is Pro, provided Zaa is neither Pro nor hydroxyproline.. Its function is as follows. Type IV dipeptidyl-peptidase which removes N-terminal dipeptides sequentially from polypeptides having unsubstituted N-termini provided that the penultimate residue is proline. The polypeptide is Probable dipeptidyl-aminopeptidase B (dapB) (Talaromyces marneffei (strain ATCC 18224 / CBS 334.59 / QM 7333) (Penicillium marneffei)).